Here is a 239-residue protein sequence, read N- to C-terminus: 2,3,4,5-tetrahydropyridine-2,6-dicarboxylate N-acetyltransferase (239 aa).

It belongs to the transferase hexapeptide repeat family. DapH subfamily.

The catalysed reaction is (S)-2,3,4,5-tetrahydrodipicolinate + acetyl-CoA + H2O = L-2-acetamido-6-oxoheptanedioate + CoA. It functions in the pathway amino-acid biosynthesis; L-lysine biosynthesis via DAP pathway; LL-2,6-diaminopimelate from (S)-tetrahydrodipicolinate (acetylase route): step 1/3. Catalyzes the transfer of an acetyl group from acetyl-CoA to tetrahydrodipicolinate. In Staphylococcus carnosus (strain TM300), this protein is 2,3,4,5-tetrahydropyridine-2,6-dicarboxylate N-acetyltransferase.